Consider the following 603-residue polypeptide: Polypeptide N-acetylgalactosaminyltransferase 10 (603 aa).

Topologically, residues 1–11 (MRRKEKRLLQA) are cytoplasmic. Residues 12–31 (VALALAALVLLPNVGLWALY) form a helical; Signal-anchor for type II membrane protein membrane-spanning segment. Residues 32-603 (RERQPDGSPG…STVLENFNRN (572 aa)) lie on the Lumenal side of the membrane. N-linked (GlcNAc...) asparagine glycosylation is found at N124 and N146. 5 disulfide bridges follow: C135–C365, C356–C432, C471–C488, C523–C538, and C563–C578. Residues 144 to 253 (LPNTSIIIPF…VNWLPPLLDR (110 aa)) form a catalytic subdomain A region. Substrate-binding residues include D185 and R214. D237 is a binding site for Mn(2+). S238 contacts substrate. Residue H239 participates in Mn(2+) binding. Residues 311–373 (PFESPVMAGG…PCSRVGHIYR (63 aa)) are catalytic subdomain B. Residue W342 coordinates substrate. Residue H370 participates in Mn(2+) binding. Positions 373 and 378 each coordinate substrate. Residues 373–384 (RKYVPYKVPAGV) are flexible loop. The Ricin B-type lectin domain occupies 458-590 (AAWGEIRNVG…SSLTQQWLFE (133 aa)). N593 is a glycosylation site (N-linked (GlcNAc...) asparagine).

The protein belongs to the glycosyltransferase 2 family. GalNAc-T subfamily. Mn(2+) serves as cofactor. In terms of tissue distribution, highly expressed in the sublingual gland, testis, small intestine, colon and ovary. Expressed at intermediate level in heart, brain, spleen, lung, stomach, cervix and uterus.

It localises to the golgi apparatus membrane. It carries out the reaction L-seryl-[protein] + UDP-N-acetyl-alpha-D-galactosamine = a 3-O-[N-acetyl-alpha-D-galactosaminyl]-L-seryl-[protein] + UDP + H(+). It catalyses the reaction L-threonyl-[protein] + UDP-N-acetyl-alpha-D-galactosamine = a 3-O-[N-acetyl-alpha-D-galactosaminyl]-L-threonyl-[protein] + UDP + H(+). It participates in protein modification; protein glycosylation. In terms of biological role, catalyzes the initial reaction in O-linked oligosaccharide biosynthesis, the transfer of an N-acetyl-D-galactosamine residue to a serine or threonine residue on the protein receptor. Has activity toward Muc5Ac and EA2 peptide substrates. This is Polypeptide N-acetylgalactosaminyltransferase 10 (Galnt10) from Rattus norvegicus (Rat).